The following is a 558-amino-acid chain: MAFAVSVQSHFAIRALKRDHFKNPSPRTFCSCFKSRPDSSYLSLKERTCFVSKPGLVTTRYRHIFQVGAETGGEFADSGEVADSLASDAPESFSWSSVILPFIFPALGGLLFGYDIGATSGATLSLQSPALSGTTWFNFSPVQLGLVVSGSLYGALLGSISVYGVADFLGRRRELIIAAVLYLLGSLITGCAPDLNILLVGRLLYGFGIGLAMHGAPLYIAETCPSQIRGTLISLKELFIVLGILLGFSVGSFQIDVVGGWRYMYGFGTPVALLMGLGMWSLPASPRWLLLRAVQGKGQLQEYKEKAMLALSKLRGRPPGDKISEKLVDDAYLSVKTAYEDEKSGGNFLEVFQGPNLKALTIGGGLVLFQQITGQPSVLYYAGSILQTAGFSAAADATRVSVIIGVFKLLMTWVAVAKVDDLGRRPLLIGGVSGIALSLFLLSAYYKFLGGFPLVAVGALLLYVGCYQISFGPISWLMVSEIFPLRTRGRGISLAVLTNFGSNAIVTFAFSPLKEFLGAENLFLLFGGIALVSLLFVILVVPETKGLSLEEIESKILK.

The transit peptide at 1-31 (MAFAVSVQSHFAIRALKRDHFKNPSPRTFCS) directs the protein to the chloroplast. 12 consecutive transmembrane segments (helical) span residues 98 to 118 (VILPFIFPALGGLLFGYDIGA), 146 to 166 (LVVSGSLYGALLGSISVYGVA), 175 to 195 (LIIAAVLYLLGSLITGCAPDL), 197 to 217 (ILLVGRLLYGFGIGLAMHGAP), 238 to 258 (LFIVLGILLGFSVGSFQIDVV), 264 to 284 (MYGFGTPVALLMGLGMWSLPA), 359 to 379 (ALTIGGGLVLFQQITGQPSVL), 400 to 420 (VSVIIGVFKLLMTWVAVAKVD), 426 to 446 (PLLIGGVSGIALSLFLLSAYY), 449 to 469 (LGGFPLVAVGALLLYVGCYQI), 491 to 511 (GISLAVLTNFGSNAIVTFAFS), and 522 to 542 (LFLLFGGIALVSLLFVILVVP).

The protein belongs to the major facilitator superfamily. Sugar transporter (TC 2.A.1.1) family.

The protein localises to the plastid. It is found in the chloroplast membrane. This chain is D-xylose-proton symporter-like 3, chloroplastic, found in Arabidopsis thaliana (Mouse-ear cress).